Consider the following 125-residue polypeptide: Large ribosomal subunit protein mL51 (125 aa).

The transit peptide at 1-29 (MWSVQQLLWGCRSLLTQGCRSFSLGSRDL) directs the protein to the mitochondrion.

Belongs to the mitochondrion-specific ribosomal protein mL51 family. In terms of assembly, component of the mitochondrial ribosome large subunit (39S) which comprises a 16S rRNA and about 50 distinct proteins.

The protein localises to the mitochondrion. This Xenopus tropicalis (Western clawed frog) protein is Large ribosomal subunit protein mL51 (mrpl51).